Reading from the N-terminus, the 187-residue chain is MSRLLLPKLFSISRTQVPAASLFNNLYRRHKRFVHWTSKMSTDSVRSSTTGGSASGARTFCSLADLSTKKCVPCNAKDLRAMTEQSAQDLLQKVAGWDLANDNDTLKLHRSWRVKSFTKGLDFFQRVADIAESEGHHPDLHLVGWNNVKIEIWTHAIGGLTENDFILAAKINELQVEDLLRKKKVAK.

Residues 1 to 33 constitute a mitochondrion transit peptide; the sequence is MSRLLLPKLFSISRTQVPAASLFNNLYRRHKRF.

It belongs to the pterin-4-alpha-carbinolamine dehydratase family.

It localises to the mitochondrion. It catalyses the reaction (4aS,6R)-4a-hydroxy-L-erythro-5,6,7,8-tetrahydrobiopterin = (6R)-L-erythro-6,7-dihydrobiopterin + H2O. Its function is as follows. Involved in tetrahydrobiopterin biosynthesis. Possesses pterin-4-alpha-carbinolamine dehydratase activity when expressed in a bacterial heterolgous system. This Arabidopsis thaliana (Mouse-ear cress) protein is Pterin-4-alpha-carbinolamine dehydratase 2, mitochondrial.